Here is a 196-residue protein sequence, read N- to C-terminus: 3-dehydroquinate dehydratase (196 aa).

3-dehydroquinate is bound by residues 23 to 25 and Arg-45; that span reads ELR. Residue His-98 is the Proton donor/acceptor of the active site. Residue Lys-122 is the Schiff-base intermediate with substrate of the active site. Residues Arg-159 and Gln-182 each coordinate 3-dehydroquinate.

This sequence belongs to the type-I 3-dehydroquinase family. Homodimer.

It catalyses the reaction 3-dehydroquinate = 3-dehydroshikimate + H2O. The protein operates within metabolic intermediate biosynthesis; chorismate biosynthesis; chorismate from D-erythrose 4-phosphate and phosphoenolpyruvate: step 3/7. Its function is as follows. Involved in the third step of the chorismate pathway, which leads to the biosynthesis of aromatic amino acids. Catalyzes the cis-dehydration of 3-dehydroquinate (DHQ) and introduces the first double bond of the aromatic ring to yield 3-dehydroshikimate. The chain is 3-dehydroquinate dehydratase from Archaeoglobus fulgidus (strain ATCC 49558 / DSM 4304 / JCM 9628 / NBRC 100126 / VC-16).